The chain runs to 825 residues: MTVLQEPVQAAIWQALNHYAYRDAVFLAERLYAEVHSEEALFLLATCYYRSGKAYKAYRLLKGHSCTTPQCKYLLAKCCVDLSKLAEGEQILSGGVFNKQKSHDDLVTEFGDSACFTLSLLGHVYCKTDRLAKGSECYQKSLSLNPFLWSPFESLCEIGEKPDPDQTFKLTSLQNFSSCLPNTCTTLVSNHSLSHRQPETVLTETPQDTIELNRLNLESSNSKYSLNTDSSVSYIDSTVISPDNVPLGPGTAILSKQVQNKPKTGRSLLGGPTALSPLTPSFGILPLETPSPGDGSYLQNYTNTPSVIDVAPTGAPTKKSVARMGQTGTKSVFSQSGNSREVTPVLVAQTQSSGPQTSTTPQVLSPTITSPPNALPRRSSRLFTSDSSTTKENSKKLKMKFPPKIPNRKTKSKTNKGGLTQPSINDSLEITKLDSSIISEGKITTVTPQIQAFNLQKAAAEGLMSLLREMGKGYLALCSYNCKEAINILSHLPSHHYSTGWVLCQIGRAYFELSEYMQAERIFSEVRRIESFRVEGMEIYSTTLWHLQKDVALSVLSKDLTDMDKNSPEAWCAAGNCFSLQREHDIAIKFFQRAIQVDPNYAYAYTLLGHEFVLTEELDKALACFRNAIRVNPRHYNAWYGLGMIYYKQEKFSLAEMHFQKALDINPQSSVLLCHIGVVQHALKKSEKALDTLNKAIVIDPKNPLCKFHRASVLFANEKYKSALQELEELKQIVPKESLVYFLIGKVYKKLGQTHLALMNFSWAMDLDPKGANNQIKEAIDKRYLPDDEEPITQEEQIMGTDESQESSMTDADDTQLHAAESDEF.

TPR repeat units follow at residues 6-35 (EPVQ…YAEV), 38-65 (EEAL…KGHS), 67-99 (TTPQ…VFNK), and 115-145 (CFTL…LSLN). Thr-205 and Thr-209 each carry phosphothreonine. Phosphoserine is present on Ser-291. Residues 306 to 423 (SVIDVAPTGA…TNKGGLTQPS (118 aa)) are disordered. Thr-313 bears the Phosphothreonine mark. The span at 326–341 (QTGTKSVFSQSGNSRE) shows a compositional bias: polar residues. Ser-339 is subject to Phosphoserine. Positions 349–362 (QTQSSGPQTSTTPQ) are enriched in low complexity. A compositionally biased stretch (polar residues) spans 363-372 (VLSPTITSPP). A Phosphothreonine modification is found at Thr-367. 2 positions are modified to phosphoserine: Ser-380 and Ser-387. A compositionally biased stretch (polar residues) spans 381–391 (RLFTSDSSTTK). Over residues 396–414 (KLKMKFPPKIPNRKTKSKT) the composition is skewed to basic residues. Ser-427 is subject to Phosphoserine. Thr-431 carries the phosphothreonine modification. Phosphoserine is present on residues Ser-436 and Ser-439. At Thr-447 the chain carries Phosphothreonine. 9 TPR repeats span residues 465 to 495 (SLLR…LPSH), 499 to 528 (TGWV…EVRR), 533 to 563 (RVEG…LTDM), 567 to 598 (SPEA…IQVD), 601 to 631 (YAYA…AIRV), 635 to 667 (HYNA…DINP), 670 to 702 (SVLL…IDPK), 704 to 734 (PLCK…KQIV), and 737 to 768 (ESLV…MDLD). The interval 782 to 825 (KRYLPDDEEPITQEEQIMGTDESQESSMTDADDTQLHAAESDEF) is disordered. Ser-822 is modified (phosphoserine).

The protein belongs to the APC3/CDC27 family. In terms of assembly, homodimer. The mammalian APC/C is composed at least of 14 distinct subunits ANAPC1, ANAPC2, CDC27/APC3, ANAPC4, ANAPC5, CDC16/APC6, ANAPC7, CDC23/APC8, ANAPC10, ANAPC11, CDC26/APC12, ANAPC13, ANAPC15 and ANAPC16 that assemble into a complex of at least 19 chains with a combined molecular mass of around 1.2 MDa; APC/C interacts with FZR1 and FBXO5. Interacts with RB. Interacts with FAM168B/MANI. Interacts with MCPH1. Phosphorylated. Phosphorylation on Ser-427 and Thr-447 occurs specifically during mitosis.

Its subcellular location is the nucleus. It localises to the cytoplasm. It is found in the cytoskeleton. The protein resides in the spindle. It functions in the pathway protein modification; protein ubiquitination. In terms of biological role, component of the anaphase promoting complex/cyclosome (APC/C), a cell cycle-regulated E3 ubiquitin ligase that controls progression through mitosis and the G1 phase of the cell cycle. The APC/C complex acts by mediating ubiquitination and subsequent degradation of target proteins: it mainly mediates the formation of 'Lys-11'-linked polyubiquitin chains and, to a lower extent, the formation of 'Lys-48'- and 'Lys-63'-linked polyubiquitin chains. The APC/C complex catalyzes assembly of branched 'Lys-11'-/'Lys-48'-linked branched ubiquitin chains on target proteins. This chain is Cell division cycle protein 27 homolog (Cdc27), found in Mus musculus (Mouse).